A 431-amino-acid polypeptide reads, in one-letter code: uncharacterized protein (431 aa).

A run of 11 helical transmembrane segments spans residues 33–53 (VARVGTATAVTALCGYAVIYL), 63–83 (FSVFGVFWGAFGLVTGAANGL), 111–131 (VSGMVGLGSLVVIAGSSPLWS), 143–163 (VALLSIGLAGFCLHATLLGML), 197–217 (LVGFIWATVAGSVAWLIMLMT), 241–261 (AHSIIAAGASAILVMGFPVLL), 273–293 (GVVILAVTLTRAPLLVPLTAM), 318–338 (LIGGVGAVGMLAAGVVGPWIM), 358–378 (AAAVAIAMLTLTGAAAVAAAL), 383–403 (SLGWVGATVGSGLLLLLPLSL), and 407–427 (TVVALLCGPLVGIGVHLVALA).

To M.tuberculosis Rv1510 and Rv3630.

It is found in the cell membrane. This is an uncharacterized protein from Mycobacterium bovis (strain ATCC BAA-935 / AF2122/97).